The following is a 116-amino-acid chain: Small ribosomal subunit protein uS13 (116 aa).

Positions 88-116 (GSRHKKGLPVRGQHTKNNARTRKGPRKQA) are disordered.

It belongs to the universal ribosomal protein uS13 family. As to quaternary structure, part of the 30S ribosomal subunit. Forms a loose heterodimer with protein S19. Forms two bridges to the 50S subunit in the 70S ribosome.

Located at the top of the head of the 30S subunit, it contacts several helices of the 16S rRNA. In the 70S ribosome it contacts the 23S rRNA (bridge B1a) and protein L5 of the 50S subunit (bridge B1b), connecting the 2 subunits; these bridges are implicated in subunit movement. Contacts the tRNAs in the A and P-sites. This chain is Small ribosomal subunit protein uS13, found in Finegoldia magna (strain ATCC 29328 / DSM 20472 / WAL 2508) (Peptostreptococcus magnus).